We begin with the raw amino-acid sequence, 279 residues long: MSAIDTLPPLREVIASHQLSARKSLGQNFLLDLNLTAKIARQAGDLSECDVLEIGPGPGGLTRGLLAEGARRVLAIEKDARCLPALAEIAAAYSGRLEVINGDALEIDPLAHMTPPIRIAANLPYNVGTELLVRWLTPRDWPPFWQSLTLMFQREVAERIVAKPGSKAYGRLALLAQWRAEARIVMSLPPEAFTPPPKVSSAVVHLTALPEPRFPADAAILSRVVAAAFNQRRKMLRAALKGQAPDIEDRLLAAGIKPTERAEQVPLEAFCALARELAR.

6 residues coordinate S-adenosyl-L-methionine: Asn-28, Leu-30, Gly-55, Glu-77, Asp-103, and Asn-122.

It belongs to the class I-like SAM-binding methyltransferase superfamily. rRNA adenine N(6)-methyltransferase family. RsmA subfamily.

Its subcellular location is the cytoplasm. The enzyme catalyses adenosine(1518)/adenosine(1519) in 16S rRNA + 4 S-adenosyl-L-methionine = N(6)-dimethyladenosine(1518)/N(6)-dimethyladenosine(1519) in 16S rRNA + 4 S-adenosyl-L-homocysteine + 4 H(+). In terms of biological role, specifically dimethylates two adjacent adenosines (A1518 and A1519) in the loop of a conserved hairpin near the 3'-end of 16S rRNA in the 30S particle. May play a critical role in biogenesis of 30S subunits. The protein is Ribosomal RNA small subunit methyltransferase A of Ruegeria pomeroyi (strain ATCC 700808 / DSM 15171 / DSS-3) (Silicibacter pomeroyi).